Here is a 196-residue protein sequence, read N- to C-terminus: Golgi to ER traffic protein 1 (196 aa).

Topologically, residues 1–10 (MFLDLHPYTI) are lumenal. Residues 11–30 (LVSIFIILLVKQIVGRIGKS) traverse the membrane as a helical segment. Topologically, residues 31 to 114 (TIQEFVWLLY…SIDKLANVLL (84 aa)) are cytoplasmic. Residues 76-114 (AKWTKLNRQADKLTSEIQKLNEEIRQSKASIDKLANVLL) are a coiled coil. The chain crosses the membrane as a helical span at residues 115–135 (MVLTTLPIWVARIFFRKTHLF). Topologically, residues 136–159 (YLRSGIFPRYIEWVLALPFFPSGA) are lumenal. The chain crosses the membrane as a helical span at residues 160–176 (VGLTVWMFAANSVIHNV). The Cytoplasmic segment spans residues 177–196 (ISLVSFAFEKRVEKPVRQKK).

This sequence belongs to the WRB/GET1 family. In terms of assembly, component of the Golgi to ER traffic (GET) complex, which is composed of GET1, GET2 and GET3. Within the complex, GET1 and GET2 form a heterotetramer which is stabilized by phosphatidylinositol binding and which binds to the GET3 homodimer.

The protein localises to the endoplasmic reticulum membrane. It localises to the golgi apparatus membrane. In terms of biological role, required for the post-translational delivery of tail-anchored (TA) proteins to the endoplasmic reticulum. Together with GET2, acts as a membrane receptor for soluble GET3, which recognizes and selectively binds the transmembrane domain of TA proteins in the cytosol. The GET complex cooperates with the HDEL receptor ERD2 to mediate the ATP-dependent retrieval of resident ER proteins that contain a C-terminal H-D-E-L retention signal from the Golgi to the ER. This chain is Golgi to ER traffic protein 1, found in Candida tropicalis (strain ATCC MYA-3404 / T1) (Yeast).